The sequence spans 371 residues: Queuine tRNA-ribosyltransferase (371 aa).

The Proton acceptor role is filled by Asp89. Substrate is bound by residues 89–93 (DSGGF), Asp143, Gln185, and Gly212. The interval 243-249 (GVGTPED) is RNA binding. Catalysis depends on Asp262, which acts as the Nucleophile. The segment at 267-271 (TRNAR) is RNA binding; important for wobble base 34 recognition. Cys300, Cys302, Cys305, and His331 together coordinate Zn(2+).

This sequence belongs to the queuine tRNA-ribosyltransferase family. In terms of assembly, homodimer. Within each dimer, one monomer is responsible for RNA recognition and catalysis, while the other monomer binds to the replacement base PreQ1. Zn(2+) is required as a cofactor.

The enzyme catalyses 7-aminomethyl-7-carbaguanine + guanosine(34) in tRNA = 7-aminomethyl-7-carbaguanosine(34) in tRNA + guanine. It functions in the pathway tRNA modification; tRNA-queuosine biosynthesis. Catalyzes the base-exchange of a guanine (G) residue with the queuine precursor 7-aminomethyl-7-deazaguanine (PreQ1) at position 34 (anticodon wobble position) in tRNAs with GU(N) anticodons (tRNA-Asp, -Asn, -His and -Tyr). Catalysis occurs through a double-displacement mechanism. The nucleophile active site attacks the C1' of nucleotide 34 to detach the guanine base from the RNA, forming a covalent enzyme-RNA intermediate. The proton acceptor active site deprotonates the incoming PreQ1, allowing a nucleophilic attack on the C1' of the ribose to form the product. After dissociation, two additional enzymatic reactions on the tRNA convert PreQ1 to queuine (Q), resulting in the hypermodified nucleoside queuosine (7-(((4,5-cis-dihydroxy-2-cyclopenten-1-yl)amino)methyl)-7-deazaguanosine). The protein is Queuine tRNA-ribosyltransferase of Nitrosomonas europaea (strain ATCC 19718 / CIP 103999 / KCTC 2705 / NBRC 14298).